The primary structure comprises 153 residues: Large ribosomal subunit protein uL30 (153 aa).

The protein belongs to the universal ribosomal protein uL30 family. Part of the 50S ribosomal subunit.

In Methanospirillum hungatei JF-1 (strain ATCC 27890 / DSM 864 / NBRC 100397 / JF-1), this protein is Large ribosomal subunit protein uL30.